Consider the following 556-residue polypeptide: 2-succinyl-5-enolpyruvyl-6-hydroxy-3-cyclohexene-1-carboxylate synthase (556 aa).

This sequence belongs to the TPP enzyme family. MenD subfamily. In terms of assembly, homodimer. It depends on Mg(2+) as a cofactor. Mn(2+) is required as a cofactor. Thiamine diphosphate serves as cofactor.

The enzyme catalyses isochorismate + 2-oxoglutarate + H(+) = 5-enolpyruvoyl-6-hydroxy-2-succinyl-cyclohex-3-ene-1-carboxylate + CO2. It functions in the pathway quinol/quinone metabolism; 1,4-dihydroxy-2-naphthoate biosynthesis; 1,4-dihydroxy-2-naphthoate from chorismate: step 2/7. Its pathway is quinol/quinone metabolism; menaquinone biosynthesis. Its function is as follows. Catalyzes the thiamine diphosphate-dependent decarboxylation of 2-oxoglutarate and the subsequent addition of the resulting succinic semialdehyde-thiamine pyrophosphate anion to isochorismate to yield 2-succinyl-5-enolpyruvyl-6-hydroxy-3-cyclohexene-1-carboxylate (SEPHCHC). The polypeptide is 2-succinyl-5-enolpyruvyl-6-hydroxy-3-cyclohexene-1-carboxylate synthase (Escherichia coli O127:H6 (strain E2348/69 / EPEC)).